Consider the following 431-residue polypeptide: Histidinol dehydrogenase (431 aa).

The NAD(+) site is built by tyrosine 127, glutamine 190, and asparagine 213. The substrate site is built by serine 238, glutamine 260, and histidine 263. The Zn(2+) site is built by glutamine 260 and histidine 263. Catalysis depends on proton acceptor residues glutamate 329 and histidine 330. The substrate site is built by histidine 330, aspartate 363, glutamate 417, and histidine 422. Residue aspartate 363 coordinates Zn(2+). Histidine 422 is a binding site for Zn(2+).

The protein belongs to the histidinol dehydrogenase family. Zn(2+) serves as cofactor.

It catalyses the reaction L-histidinol + 2 NAD(+) + H2O = L-histidine + 2 NADH + 3 H(+). Its pathway is amino-acid biosynthesis; L-histidine biosynthesis; L-histidine from 5-phospho-alpha-D-ribose 1-diphosphate: step 9/9. In terms of biological role, catalyzes the sequential NAD-dependent oxidations of L-histidinol to L-histidinaldehyde and then to L-histidine. In Methanopyrus kandleri (strain AV19 / DSM 6324 / JCM 9639 / NBRC 100938), this protein is Histidinol dehydrogenase.